The following is a 78-amino-acid chain: MSRVCQLTGTRANNGMAVSHSHIRTKKLQQANLQQRRLWWAEGNRWVKLRVTTRALKTIQKKGLGAYAKSLGINLAKI.

It belongs to the bacterial ribosomal protein bL28 family.

The sequence is that of Large ribosomal subunit protein bL28 from Synechococcus sp. (strain CC9605).